A 140-amino-acid chain; its full sequence is Lysozyme c-1 (140 aa).

The first 20 residues, Met-1–Ala-20, serve as a signal peptide directing secretion. The 120-residue stretch at Lys-21–Phe-140 folds into the C-type lysozyme domain. 4 disulfide bridges follow: Cys-26–Cys-139, Cys-47–Cys-128, Cys-81–Cys-94, and Cys-90–Cys-108. Active-site residues include Glu-52 and Asp-69.

Belongs to the glycosyl hydrolase 22 family. In terms of tissue distribution, expressed in salivary glands and Malpighian tubules.

The catalysed reaction is Hydrolysis of (1-&gt;4)-beta-linkages between N-acetylmuramic acid and N-acetyl-D-glucosamine residues in a peptidoglycan and between N-acetyl-D-glucosamine residues in chitodextrins.. Lysozymes have primarily a bacteriolytic function; those in tissues and body fluids are associated with the monocyte-macrophage system and enhance the activity of immunoagents. This chain is Lysozyme c-1, found in Anopheles gambiae (African malaria mosquito).